The primary structure comprises 503 residues: Probable cytosol aminopeptidase (503 aa).

2 residues coordinate Mn(2+): Lys-272 and Asp-277. The active site involves Lys-284. Asp-295, Asp-354, and Glu-356 together coordinate Mn(2+). Residue Arg-358 is part of the active site.

This sequence belongs to the peptidase M17 family. Requires Mn(2+) as cofactor.

It localises to the cytoplasm. It carries out the reaction Release of an N-terminal amino acid, Xaa-|-Yaa-, in which Xaa is preferably Leu, but may be other amino acids including Pro although not Arg or Lys, and Yaa may be Pro. Amino acid amides and methyl esters are also readily hydrolyzed, but rates on arylamides are exceedingly low.. The catalysed reaction is Release of an N-terminal amino acid, preferentially leucine, but not glutamic or aspartic acids.. In terms of biological role, presumably involved in the processing and regular turnover of intracellular proteins. Catalyzes the removal of unsubstituted N-terminal amino acids from various peptides. The polypeptide is Probable cytosol aminopeptidase (Chlorobium limicola (strain DSM 245 / NBRC 103803 / 6330)).